The following is a 595-amino-acid chain: Aspartate--tRNA(Asp/Asn) ligase (595 aa).

E171 contributes to the L-aspartate binding site. The tract at residues 195–198 (QLFK) is aspartate. R217 contributes to the L-aspartate binding site. Residues 217–219 (RDE) and Q226 each bind ATP. An L-aspartate-binding site is contributed by H454. E488 is an ATP binding site. R495 contributes to the L-aspartate binding site. Residue 540–543 (GLDR) participates in ATP binding.

The protein belongs to the class-II aminoacyl-tRNA synthetase family. Type 1 subfamily. As to quaternary structure, homodimer.

It localises to the cytoplasm. The catalysed reaction is tRNA(Asx) + L-aspartate + ATP = L-aspartyl-tRNA(Asx) + AMP + diphosphate. Functionally, aspartyl-tRNA synthetase with relaxed tRNA specificity since it is able to aspartylate not only its cognate tRNA(Asp) but also tRNA(Asn). Reaction proceeds in two steps: L-aspartate is first activated by ATP to form Asp-AMP and then transferred to the acceptor end of tRNA(Asp/Asn). The sequence is that of Aspartate--tRNA(Asp/Asn) ligase from Bordetella petrii (strain ATCC BAA-461 / DSM 12804 / CCUG 43448).